We begin with the raw amino-acid sequence, 534 residues long: Nuclear hormone receptor FTZ-F1 (534 aa).

The segment at residues 86–161 is a DNA-binding region (nuclear receptor); the sequence is EELCPVCGDK…VGMKLEAVRA (76 aa). NR C4-type zinc fingers lie at residues 89–109 and 125–149; these read CPVC…CESC and CVAE…FQKC. A compositionally biased stretch (low complexity) spans 227-246; the sequence is VSSLTSSPESSPGPALLGAQ. Residues 227–296 form a disordered region; that stretch reads VSSLTSSPES…SSTAEATSTE (70 aa). A compositionally biased stretch (pro residues) spans 247–256; it reads PQPPQPPPPP. Low complexity predominate over residues 278 to 296; the sequence is TQSNTAATPSSTAEATSTE. The 233-residue stretch at 299–531 folds into the NR LBD domain; it reads RVSPMIREFV…TLLMEMLHAK (233 aa).

Belongs to the nuclear hormone receptor family. NR5 subfamily. In terms of tissue distribution, present in all tissues examined.

It is found in the nucleus. May play an important role in development. The sequence is that of Nuclear hormone receptor FTZ-F1 (FTZ-F1) from Bombyx mori (Silk moth).